The following is a 98-amino-acid chain: NADH-ubiquinone oxidoreductase chain 4L (98 aa).

The next 3 membrane-spanning stretches (helical) occupy residues 2-22, 37-57, and 61-81; these read PSIFINIILAFIIALLGMLIF, MLSMFILSTLTILSLHLTMSF, and ILLLVFAACEAAVGLALLVTV.

It belongs to the complex I subunit 4L family. As to quaternary structure, core subunit of respiratory chain NADH dehydrogenase (Complex I) which is composed of 45 different subunits.

The protein resides in the mitochondrion inner membrane. It carries out the reaction a ubiquinone + NADH + 5 H(+)(in) = a ubiquinol + NAD(+) + 4 H(+)(out). Functionally, core subunit of the mitochondrial membrane respiratory chain NADH dehydrogenase (Complex I) which catalyzes electron transfer from NADH through the respiratory chain, using ubiquinone as an electron acceptor. Part of the enzyme membrane arm which is embedded in the lipid bilayer and involved in proton translocation. In Varecia rubra (Red ruffed lemur), this protein is NADH-ubiquinone oxidoreductase chain 4L (MT-ND4L).